Reading from the N-terminus, the 883-residue chain is MQKIMHISVLLSPVLWGLIFGVSSNSIQIGGLFPRGADQEYSAFRVGMVQFSTSEFRLTPHIDNLEVANSFAVTNAFCSQFSRGVYAIFGFYDKKSVNTITSFCGTLHVSFITPSFPTDGTHPFVIQMRPDLKGALLSLIEYYQWDKFAYLYDSDRGLSTLQAVLDSAAEKKWQVTAINVGNINNDKKDETYRSLFQDLELKKERRVILDCERDKVNDIVDQVITIGKHVKGYHYIIANLGFTDGDLLKIQFGGANVSGFQIVDYDDSLVSKFIERWSTLEEKEYPGAHTATIKYTSALTYDAVQVMTEAFRNLRKQRIEISRRGNAGDCLANPAVPWGQGVEIERALKQVQVEGLSGNIKFDQNGKRINYTINIMELKTNGPRKIGYWSEVDKMVVTLTELPSGNDTSGLENKTVVVTTILESPYVMMKKNHEMLEGNERYEGYCVDLAAEIAKHCGFKYKLTIVGDGKYGARDADTKIWNGMVGELVYGKADIAIAPLTITLVREEVIDFSKPFMSLGISIMIKKPQKSKPGVFSFLDPLAYEIWMCIVFAYIGVSVVLFLVSRFSPYEWHTEEFEDGRETQSSESTNEFGIFNSLWFSLGAFMQQGCDISPRSLSGRIVGGVWWFFTLIIISSYTANLAAFLTVERMVSPIESAEDLSKQTEIAYGTLDSGSTKEFFRRSKIAVFDKMWTYMRSAEPSVFVRTTAEGVARVRKSKGKYAYLLESTMNEYIEQRKPCDTMKVGGNLDSKGYGIATPKGSSLGNAVNLAVLKLNEQGLLDKLKNKWWYDKGECGSGGGDSKEKTSALSLSNVAGVFYILVGGLGLAMLVALIEFCYKSRAEAKRMKVAKNAQNINPSSSQNSQNFATYKEGYNVYGIESVKI.

A signal peptide spans 1-24; the sequence is MQKIMHISVLLSPVLWGLIFGVSS. Residues 25 to 543 are Extracellular-facing; it reads NSIQIGGLFP…GVFSFLDPLA (519 aa). A disulfide bridge connects residues Cys78 and Cys330. N-linked (GlcNAc...) asparagine glycans are attached at residues Asn256, Asn370, Asn406, and Asn413. Residues Pro499, Thr501, and Arg506 each contribute to the L-glutamate site. A helical transmembrane segment spans residues 544-564; that stretch reads YEIWMCIVFAYIGVSVVLFLV. The Cytoplasmic segment spans residues 565-591; the sequence is SRFSPYEWHTEEFEDGRETQSSESTNE. The helical; Pore-forming intramembrane region spans 592-607; the sequence is FGIFNSLWFSLGAFMQ. The stretch at 608–610 is an intramembrane region; that stretch reads QGC. Cys610 carries S-palmitoyl cysteine lipidation. Residues 611–616 lie on the Cytoplasmic side of the membrane; that stretch reads DISPRS. The chain crosses the membrane as a helical span at residues 617-637; the sequence is LSGRIVGGVWWFFTLIIISSY. Topologically, residues 638 to 812 are extracellular; the sequence is TANLAAFLTV…EKTSALSLSN (175 aa). Ser675 and Thr676 together coordinate L-glutamate. A Phosphoserine; by PKC modification is found at Ser683. Phosphoserine; by PKG is present on Ser717. Position 726 (Glu726) interacts with L-glutamate. Cys739 and Cys794 are joined by a disulfide. Residues 813 to 833 traverse the membrane as a helical segment; sequence VAGVFYILVGGLGLAMLVALI. Residues 834-883 are Cytoplasmic-facing; sequence EFCYKSRAEAKRMKVAKNAQNINPSSSQNSQNFATYKEGYNVYGIESVKI. Cys836 is lipidated: S-palmitoyl cysteine. A phosphoserine mark is found at Ser860 and Ser863. The required for interaction with IQSEC1 stretch occupies residues 867–877; sequence ATYKEGYNVYG. Phosphotyrosine is present on Tyr876. Phosphoserine is present on Ser880.

It belongs to the glutamate-gated ion channel (TC 1.A.10.1) family. GRIA2 subfamily. Homotetramer or heterotetramer of pore-forming glutamate receptor subunits. Tetramers may be formed by the dimerization of dimers. May interact with MPP4. Forms a ternary complex with GRIP1 and CSPG4. Interacts with ATAD1 in an ATP-dependent manner. ATAD1-catalyzed ATP hydrolysis disrupts binding to ATAD1 and to GRIP1 and leads to AMPAR complex disassembly. Interacts with GRIP1 and GRIP2. Interacts with NSF via its C-terminus. Isoform 1, but not isoform 3, interacts with PICK1. Interacts with CACNG2. Interacts with GRIA1 and SYNDIG1. Part of a complex containing GRIA2, NSF and NAPA and/or NAPB. Interacts with SNX27 (via PDZ domain); the interaction is required for recycling to the plasma membrane when endocytosed and prevent degradation in lysosomes. Interacts with LRFN1. Found in a complex with GRIA1, GRIA3, GRIA4, CNIH2, CNIH3, CACNG2, CACNG3, CACNG4, CACNG5, CACNG7 and CACNG8. Interacts with CACNG5. Interacts with OLFM2. Interacts with AP4B1, AP4E1 and AP4M1; probably indirect it mediates the somatodendritic localization of GRIA2 in neurons. Forms a complex with GRIP1, NSG1 and STX12; controls the intracellular fate of AMPAR and the endosomal sorting of the GRIA2 subunit toward recycling and membrane targeting. Interacts with IQSEC1; the interaction is required for ARF6 activation. Interacts (heterotetramer form) with CNIH2 and CNIH3; this interaction promotes expression at the plasma membrane and extensively modulates their gating properties by slowing deactivation and desensitization kinetics. Palmitoylated. Depalmitoylated upon L-glutamate stimulation. ZDHHC3/GODZ specifically palmitoylates Cys-610, which leads to Golgi retention and decreased cell surface expression. In contrast, Cys-836 palmitoylation does not affect cell surface expression but regulates stimulation-dependent endocytosis. Post-translationally, N-glycosylated. In terms of processing, ubiquitinated by RNF167, leading to its degradation. Phosphorylation at Tyr-876 is required for interaction with IQSEC1 and ARF6 activation, which in turn triggers AMPAR internalization for persistent synaptic depression. In terms of tissue distribution, detected in brain cortex, hippocampus and cerebellum (at protein level). Detected in hippocampus.

The protein localises to the cell membrane. The protein resides in the postsynaptic cell membrane. Its subcellular location is the postsynaptic density membrane. The enzyme catalyses Ca(2+)(in) = Ca(2+)(out). It catalyses the reaction Na(+)(in) = Na(+)(out). Functionally, ionotropic glutamate receptor that functions as a ligand-gated cation channel, gated by L-glutamate and glutamatergic agonists such as alpha-amino-3-hydroxy-5-methyl-4-isoxazolepropionic acid (AMPA), quisqualic acid, and kainic acid. L-glutamate acts as an excitatory neurotransmitter at many synapses in the central nervous system and plays an important role in fast excitatory synaptic transmission. Binding of the excitatory neurotransmitter L-glutamate induces a conformation change, leading to the opening of the cation channel, and thereby converts the chemical signal to an electrical impulse upon entry of monovalent and divalent cations such as sodium and calcium. The receptor then desensitizes rapidly and enters in a transient inactive state, characterized by the presence of bound agonist. In the presence of CACNG4 or CACNG7 or CACNG8, shows resensitization which is characterized by a delayed accumulation of current flux upon continued application of L-glutamate. Through complex formation with NSG1, GRIP1 and STX12 controls the intracellular fate of AMPAR and the endosomal sorting of the GRIA2 subunit toward recycling and membrane targeting. This Mus musculus (Mouse) protein is Glutamate receptor 2.